The chain runs to 142 residues: Hydrogenase maturation factor HypA (142 aa).

H2 provides a ligand contact to Ni(2+). The Zn(2+) site is built by C73, C76, C109, and C112.

The protein belongs to the HypA/HybF family.

In terms of biological role, involved in the maturation of [NiFe] hydrogenases. Required for nickel insertion into the metal center of the hydrogenase. In Methanopyrus kandleri (strain AV19 / DSM 6324 / JCM 9639 / NBRC 100938), this protein is Hydrogenase maturation factor HypA.